Consider the following 60-residue polypeptide: Large ribosomal subunit protein uL30 (60 aa).

It belongs to the universal ribosomal protein uL30 family. In terms of assembly, part of the 50S ribosomal subunit.

In Symbiobacterium thermophilum (strain DSM 24528 / JCM 14929 / IAM 14863 / T), this protein is Large ribosomal subunit protein uL30.